The primary structure comprises 425 residues: Gamma-glutamyl phosphate reductase (425 aa).

The protein belongs to the gamma-glutamyl phosphate reductase family.

It is found in the cytoplasm. It catalyses the reaction L-glutamate 5-semialdehyde + phosphate + NADP(+) = L-glutamyl 5-phosphate + NADPH + H(+). The protein operates within amino-acid biosynthesis; L-proline biosynthesis; L-glutamate 5-semialdehyde from L-glutamate: step 2/2. Functionally, catalyzes the NADPH-dependent reduction of L-glutamate 5-phosphate into L-glutamate 5-semialdehyde and phosphate. The product spontaneously undergoes cyclization to form 1-pyrroline-5-carboxylate. This chain is Gamma-glutamyl phosphate reductase, found in Opitutus terrae (strain DSM 11246 / JCM 15787 / PB90-1).